Reading from the N-terminus, the 450-residue chain is Chromosomal replication initiator protein DnaA (450 aa).

The domain I, interacts with DnaA modulators stretch occupies residues Met1–Lys69. Positions Lys69–Ser113 are domain II. The domain III, AAA+ region stretch occupies residues Ser114–Ser330. Residues Gly158, Gly160, Lys161, and Ser162 each contribute to the ATP site. The interval Ser331 to Lys450 is domain IV, binds dsDNA.

Belongs to the DnaA family. As to quaternary structure, oligomerizes as a right-handed, spiral filament on DNA at oriC.

It is found in the cytoplasm. In terms of biological role, plays an essential role in the initiation and regulation of chromosomal replication. ATP-DnaA binds to the origin of replication (oriC) to initiate formation of the DNA replication initiation complex once per cell cycle. Binds the DnaA box (a 9 base pair repeat at the origin) and separates the double-stranded (ds)DNA. Forms a right-handed helical filament on oriC DNA; dsDNA binds to the exterior of the filament while single-stranded (ss)DNA is stabiized in the filament's interior. The ATP-DnaA-oriC complex binds and stabilizes one strand of the AT-rich DNA unwinding element (DUE), permitting loading of DNA polymerase. After initiation quickly degrades to an ADP-DnaA complex that is not apt for DNA replication. Binds acidic phospholipids. In Pelobacter propionicus (strain DSM 2379 / NBRC 103807 / OttBd1), this protein is Chromosomal replication initiator protein DnaA.